Consider the following 521-residue polypeptide: Transcription activator of gluconeogenesis SS1G_02293 (521 aa).

The span at Met-1–Val-12 shows a compositional bias: acidic residues. The tract at residues Met-1–Pro-75 is disordered. Composition is skewed to basic and acidic residues over residues Tyr-21 to Gly-49 and Pro-65 to Arg-74. The zn(2)-C6 fungal-type DNA-binding region spans Cys-84 to Cys-112. 3 disordered regions span residues Ser-273–Phe-308, Val-322–Ser-358, and Asn-478–Arg-501. Polar residues predominate over residues Ser-275 to Met-287. Composition is skewed to low complexity over residues Asn-297 to Phe-308, Lys-337 to Gly-351, and Gly-480 to Ser-494. A PAS domain is found at Thr-426–Thr-497.

This sequence belongs to the ERT1/acuK family.

The protein resides in the nucleus. In terms of biological role, transcription factor which regulates nonfermentable carbon utilization. Activator of gluconeogenetic genes. The sequence is that of Transcription activator of gluconeogenesis SS1G_02293 from Sclerotinia sclerotiorum (strain ATCC 18683 / 1980 / Ss-1) (White mold).